A 383-amino-acid chain; its full sequence is uncharacterized protein (383 aa).

One can recognise a YcaO domain in the interval 58–383 (GKGATRTQAR…RVGRRIRSSI (326 aa)). A disordered region spans residues 80–100 (AERKPEDETFTAHPEDCDGLD).

This is an uncharacterized protein from Methanothermobacter thermautotrophicus (strain ATCC 29096 / DSM 1053 / JCM 10044 / NBRC 100330 / Delta H) (Methanobacterium thermoautotrophicum).